The primary structure comprises 310 residues: Serine/threonine-protein kinase pim-2 (310 aa).

Residues Tyr30–Met290 form the Protein kinase domain. ATP-binding positions include Leu36–Val44 and Lys59. The active-site Proton acceptor is the Asp167.

It belongs to the protein kinase superfamily. CAMK Ser/Thr protein kinase family. PIM subfamily. In terms of processing, autophosphorylated.

It carries out the reaction L-seryl-[protein] + ATP = O-phospho-L-seryl-[protein] + ADP + H(+). The catalysed reaction is L-threonyl-[protein] + ATP = O-phospho-L-threonyl-[protein] + ADP + H(+). In terms of biological role, proto-oncogene with serine/threonine kinase activity involved in cell survival and cell proliferation. The polypeptide is Serine/threonine-protein kinase pim-2 (pim2) (Danio rerio (Zebrafish)).